Reading from the N-terminus, the 151-residue chain is Large ribosomal subunit protein uL15 (151 aa).

The disordered stretch occupies residues 37-57 (GMRGQKSRSGRPTRPGFEGGQ).

Belongs to the universal ribosomal protein uL15 family. In terms of assembly, part of the 50S ribosomal subunit.

Binds to the 23S rRNA. The sequence is that of Large ribosomal subunit protein uL15 from Prochlorococcus marinus (strain MIT 9313).